Reading from the N-terminus, the 538-residue chain is Putative cysteine ligase BshC (538 aa).

A coiled-coil region spans residues 460 to 484; the sequence is KINEQIELLERMLKRNVEKKHEVEL.

This sequence belongs to the BshC family.

Involved in bacillithiol (BSH) biosynthesis. May catalyze the last step of the pathway, the addition of cysteine to glucosamine malate (GlcN-Mal) to generate BSH. This Bacillus thuringiensis (strain Al Hakam) protein is Putative cysteine ligase BshC.